The chain runs to 210 residues: Claudin-4 (210 aa).

The Cytoplasmic segment spans residues 1–7 (MASMGLQ). The tract at residues 1-103 (MASMGLQVMG…GVLLSVVGGK (103 aa)) is interaction with EPHA2. Residues 8–28 (VMGIALAVLGWLGAILSCALP) traverse the membrane as a helical segment. Residues 29–81 (MWRVTAFIGSNIVTSQTIWEGLWMNCVVQSTGQMQCKVYDSLLALPQDLQAAR) lie on the Extracellular side of the membrane. Cys-54 and Cys-64 are disulfide-bonded. Residues 82 to 102 (ALMVVSIILAALGVLLSVVGG) traverse the membrane as a helical segment. The Cytoplasmic portion of the chain corresponds to 103–117 (KCTNCVEDESAKAKT). The helical transmembrane segment at 118-138 (MIVAGVVFLLAGLLVMVPASW) threads the bilayer. Over 139-160 (TANNIIRDFYNPLVVSGQKREM) the chain is Extracellular. The chain crosses the membrane as a helical span at residues 161–181 (GASLYVGWAASGLLLLGGALL). Over 182-210 (CCNCPPRADKPYSAKYSAAARSAPASNYV) the chain is Cytoplasmic. Tyr-209 is subject to Phosphotyrosine. An interactions with TJP1, TJP2 and TJP3 region spans residues 209 to 210 (YV).

It belongs to the claudin family. As to quaternary structure, can form heteropolymeric strands with other claudins. Interacts with CLDN8. Interacts with CLDN1. Directly interacts with TJP1/ZO-1. Interacts with TJP2/ZO-2 and TJP3/ZO-3. Interacts with EPHA2; phosphorylates CLDN4 and may regulate tight junctions. In terms of processing, phosphorylated. Phosphorylation by EPHA2 is stimulated by EFNA1 and alters interaction with TJP1.

The protein resides in the cell junction. Its subcellular location is the tight junction. It localises to the cell membrane. It carries out the reaction chloride(in) = chloride(out). It catalyses the reaction bromide(in) = bromide(out). The catalysed reaction is iodide(out) = iodide(in). The enzyme catalyses fluoride(in) = fluoride(out). Its function is as follows. Can associate with other claudins to regulate tight junction structural and functional strand dynamics. May coassemble with CLDN8 into tight junction strands containing anion-selective channels that convey paracellular chloride permeability in renal collecting ducts. May integrate into CLDN3 strands to modulate localized tight junction barrier properties. May disrupt strand assembly of channel-forming CLDN2 and CLDN15 and inhibit cation conductance. Cannot form tight junction strands on its own. This chain is Claudin-4 (CLDN4), found in Canis lupus familiaris (Dog).